Consider the following 571-residue polypeptide: Calcium-dependent protein kinase 16 (571 aa).

A disordered region spans residues 1–74; it reads MGLCFSSAAK…TRHTPPHGKV (74 aa). Gly-2 is lipidated: N-myristoyl glycine. Cys-4 carries the S-palmitoyl cysteine lipid modification. Residues 63-72 are compositionally biased toward basic residues; the sequence is TPTRHTPPHG. A Protein kinase domain is found at 108–368; that stretch reads YTIGKLLGHG…AAQALSHPWV (261 aa). ATP-binding positions include 114 to 122 and Lys-137; that span reads LGHGQFGYT. Asp-234 serves as the catalytic Proton acceptor. A Phosphoserine modification is found at Ser-274. The interval 374–404 is autoinhibitory domain; sequence ASEIPIDISVLNNMRQFVKFSRLKQFALRAL. EF-hand domains lie at 411–446, 448–483, 490–525, and 528–555; these read EELADLRDQFDAIDVDKNGVISLEEMRQALAKDHPW, LKDARVAEILQAIDSNTDGFVDFGEFVAAALHVNQL, KWQQRSRAAFEKFDIDGDGFITAEELRMHTGLKGSI, and LLEEADIDNDGKISLQEFRRLLRTASIK. Ca(2+)-binding residues include Asp-424, Asp-426, Asn-428, Glu-435, Asp-461, Asn-463, Asp-465, Glu-472, Asp-503, Asp-505, Asp-507, Glu-514, Asp-533, Asp-535, Asp-537, and Lys-539. Residue Ser-541 is modified to Phosphoserine. Glu-544 contributes to the Ca(2+) binding site.

This sequence belongs to the protein kinase superfamily. Ser/Thr protein kinase family. CDPK subfamily.

The protein resides in the cell membrane. Its subcellular location is the nucleus. It carries out the reaction L-seryl-[protein] + ATP = O-phospho-L-seryl-[protein] + ADP + H(+). The enzyme catalyses L-threonyl-[protein] + ATP = O-phospho-L-threonyl-[protein] + ADP + H(+). Activated by calcium. Autophosphorylation may play an important role in the regulation of the kinase activity. May play a role in signal transduction pathways that involve calcium as a second messenger. This Arabidopsis thaliana (Mouse-ear cress) protein is Calcium-dependent protein kinase 16 (CPK16).